The primary structure comprises 139 residues: Nucleoside diphosphate kinase (139 aa).

The ATP site is built by lysine 10, phenylalanine 58, arginine 86, threonine 92, arginine 103, and asparagine 113. The active-site Pros-phosphohistidine intermediate is the histidine 116.

The protein belongs to the NDK family. Homotetramer. It depends on Mg(2+) as a cofactor.

Its subcellular location is the cytoplasm. The enzyme catalyses a 2'-deoxyribonucleoside 5'-diphosphate + ATP = a 2'-deoxyribonucleoside 5'-triphosphate + ADP. It catalyses the reaction a ribonucleoside 5'-diphosphate + ATP = a ribonucleoside 5'-triphosphate + ADP. Its function is as follows. Major role in the synthesis of nucleoside triphosphates other than ATP. The ATP gamma phosphate is transferred to the NDP beta phosphate via a ping-pong mechanism, using a phosphorylated active-site intermediate. This chain is Nucleoside diphosphate kinase, found in Desulfovibrio desulfuricans (strain ATCC 27774 / DSM 6949 / MB).